A 476-amino-acid polypeptide reads, in one-letter code: Major facilitator superfamily domain-containing protein 12 (476 aa).

Position 1 is an N-acetylmethionine (Met-1). The Cytoplasmic portion of the chain corresponds to 1–25 (MSPPSDDAGPGPPRTLSLAARLSFA). Residues 26-46 (VGHFLNDLCAGMWFTYLLLFL) traverse the membrane as a helical segment. At 47–55 (HSVRGYSSR) the chain is on the lumenal side. The chain crosses the membrane as a helical span at residues 56–76 (GAGLLLLLGQVADGLCTPLVG). Topologically, residues 77-94 (YEADRASCVRCGPRKAWH) are cytoplasmic. A helical membrane pass occupies residues 95–115 (LAGTVCVLLSFPFIFSPCLGC). The Lumenal segment spans residues 116–121 (GEATPE). Residues 122–142 (WAALLYYGPFIVVFQFGWAAT) form a helical membrane-spanning segment. At 143 to 167 (QIAHLSLIPELVTSDHEKVELTALR) the chain is on the cytoplasmic side. Residues 168–188 (YAFTVVANITVYGAAWLLLHL) form a helical membrane-spanning segment. Over 189-213 (QGSAHGEQDISVGDQLGVQDVPVFR) the chain is Lumenal. A helical transmembrane segment spans residues 214 to 234 (NLALLVVGVGAIFSLLFHLGT). Residues 235-284 (KEGHRSQHWGNEPNEHTPLVAPAAQPLLLWKHWLREPAFYQVGMLYMTTR) lie on the Cytoplasmic side of the membrane. Thr-251 carries the post-translational modification Phosphothreonine. A helical transmembrane segment spans residues 285-305 (LIVNLSQTYIAMYLTYSLSLP). A topological domain (lumenal) is located at residue Lys-306. The helical transmembrane segment at 307–327 (KFIATIPLVMYLSGFFSSFLM) threads the bilayer. Over 328–343 (KPVNRRIGRNMTYFTG) the chain is Cytoplasmic. 2 consecutive transmembrane segments (helical) span residues 344–364 (LLVI…GVAV) and 365–385 (YGAA…SLAM). Residues 386–398 (TADLIGPHTHSGA) lie on the Cytoplasmic side of the membrane. A helical membrane pass occupies residues 399–419 (FVYGAMSFSDKVANGLAVMAV). Over 420–444 (QSLHPCPSELCCGACISFYHWVMTA) the chain is Lumenal. Residues 445 to 465 (VTGGVGVAAALALCSLLIWPI) form a helical membrane-spanning segment. The Cytoplasmic portion of the chain corresponds to 466 to 476 (RIRNRDPRDRP).

It belongs to the major facilitator superfamily. Phosphorylation at Thr-251 by MTOR via mTORC1 pathway promotes cysteine transport in lysosomes, thereby regulating lysosomal cysteine and cystine storage and redox homeostasis.

The protein localises to the melanosome membrane. Its subcellular location is the lysosome membrane. The catalysed reaction is L-cysteine(in) = L-cysteine(out). Its function is as follows. Transporter that mediates the import of cysteine into melanosomes, thereby regulating skin/hair pigmentation. In melanosomes, cysteine import is required both for normal levels of cystine, the oxidized dimer of cysteine, and provide cysteine for the production of the cysteinyldopas used in pheomelanin synthesis, thereby regulating skin/hair pigmentation. Also catalyzes import of cysteine into lysosomes in non-pigmented cells, regulating lysosomal cystine and cysteine storage, which is essnetial for redox homeostasis. The chain is Major facilitator superfamily domain-containing protein 12 from Mus musculus (Mouse).